Reading from the N-terminus, the 275-residue chain is tRNA pseudouridine synthase A (275 aa).

Catalysis depends on aspartate 60, which acts as the Nucleophile. Substrate is bound at residue tyrosine 119.

The protein belongs to the tRNA pseudouridine synthase TruA family. Homodimer.

It catalyses the reaction uridine(38/39/40) in tRNA = pseudouridine(38/39/40) in tRNA. Its function is as follows. Formation of pseudouridine at positions 38, 39 and 40 in the anticodon stem and loop of transfer RNAs. In Synechocystis sp. (strain ATCC 27184 / PCC 6803 / Kazusa), this protein is tRNA pseudouridine synthase A.